The sequence spans 96 residues: Co-chaperonin GroES (96 aa).

It belongs to the GroES chaperonin family. Heptamer of 7 subunits arranged in a ring. Interacts with the chaperonin GroEL.

The protein resides in the cytoplasm. Together with the chaperonin GroEL, plays an essential role in assisting protein folding. The GroEL-GroES system forms a nano-cage that allows encapsulation of the non-native substrate proteins and provides a physical environment optimized to promote and accelerate protein folding. GroES binds to the apical surface of the GroEL ring, thereby capping the opening of the GroEL channel. The sequence is that of Co-chaperonin GroES from Alcanivorax borkumensis (strain ATCC 700651 / DSM 11573 / NCIMB 13689 / SK2).